The sequence spans 457 residues: Glycine receptor subunit alpha-1 (457 aa).

The N-terminal stretch at 1–28 (MYSFNTLRFYLWETIVFFSLAASKEAEA) is a signal peptide. Residues 29–250 (ARSAPKPMSP…RFHLERQMGY (222 aa)) are Extracellular-facing. Asn-66 carries an N-linked (GlcNAc...) asparagine glycan. Residues Arg-93 and Ser-157 each contribute to the glycine site. The cysteines at positions 166 and 180 are disulfide-linked. Zn(2+)-binding residues include Glu-220 and Asp-222. Cys-226 and Cys-237 are joined by a disulfide. 230–235 (YNTGKF) contributes to the strychnine binding site. Glycine is bound at residue Thr-232. His-243 lines the Zn(2+) pocket. The chain crosses the membrane as a helical span at residues 251-272 (YLIQMYIPSLLIVILSWISFWI). The Cytoplasmic portion of the chain corresponds to 273–277 (NMDAA). Residues 278-298 (PARVGLGITTVLTMTTQSSGS) form a helical membrane-spanning segment. Residues 299 to 309 (RASLPKVSYVK) are Extracellular-facing. Residues 310-330 (AIDIWMAVCLLFVFSALLEYA) traverse the membrane as a helical segment. Topologically, residues 331 to 425 (AVNFVSRQHK…FIQRAKKIDK (95 aa)) are cytoplasmic. The interval 391–410 (KGANNNNTTNPPPAPSKSPE) is disordered. A helical membrane pass occupies residues 426-446 (ISRIGFPMAFLIFNMFYWIIY). Residues 447–457 (KIVRREDVHNK) are Extracellular-facing.

The protein belongs to the ligand-gated ion channel (TC 1.A.9) family. Glycine receptor (TC 1.A.9.3) subfamily. GLRA1 sub-subfamily. In terms of assembly, interacts with GLRB to form heteropentameric channels; this is probably the predominant form in vivo. Heteropentamer composed of four GLRA1 subunits and one GLRB subunit. Heteropentamer composed of two GLRA1 and three GLRB. Heteropentamer composed of three GLRA1 and two GLRB. Homopentamer (in vitro). Both homopentamers and heteropentamers form functional ion channels, but their characteristics are subtly different. In terms of tissue distribution, detected in spinal cord neurons. Detected in brain stem neurons. Detected at lower levels in hippocampus and cerebellum. Detected in the inner plexiform layer of the retina (at protein level).

The protein resides in the postsynaptic cell membrane. The protein localises to the synapse. It localises to the perikaryon. Its subcellular location is the cell projection. It is found in the dendrite. The protein resides in the cell membrane. It carries out the reaction chloride(in) = chloride(out). Channel opening is triggered by extracellular glycine. Channel characteristics depend on the subunit composition; heteropentameric channels are activated by lower glycine levels and display faster desensitization. Channel opening is also triggered by taurine and beta-alanine. Inhibited by strychnine. Strychnine binding locks the channel in a closed conformation and prevents channel opening in response to extracellular glycine. Inhibited by picrotoxin. Channel activity is enhanced by 5 uM Zn(2+) and inhibited by 100 uM Zn(2+). Functionally, subunit of heteromeric glycine-gated chloride channels. Plays an important role in the down-regulation of neuronal excitability. Contributes to the generation of inhibitory postsynaptic currents. Channel activity is potentiated by ethanol. Potentiation of channel activity by intoxicating levels of ethanol contribute to the sedative effects of ethanol. The sequence is that of Glycine receptor subunit alpha-1 (Glra1) from Mus musculus (Mouse).